Reading from the N-terminus, the 380-residue chain is Protein Wnt-5a (380 aa).

Residues M1–A37 form the signal peptide. A propeptide spanning residues Q38–Y61 is cleaved from the precursor. C104 and C115 are oxidised to a cystine. N-linked (GlcNAc...) asparagine glycans are attached at residues N114 and N120. Disulfide bonds link C154–C162, C164–C182, C238–C252, C240–C247, C309–C340, C325–C335, C339–C379, C355–C370, C357–C367, and C362–C363. S244 is lipidated: O-palmitoleoyl serine; by PORCN. N312 and N326 each carry an N-linked (GlcNAc...) asparagine glycan.

It belongs to the Wnt family. In terms of assembly, forms a soluble 1:1 complex with AFM; this prevents oligomerization and is required for prolonged biological activity. The complex with AFM may represent the physiological form in body fluids. Homooligomer; disulfide-linked, leading to inactivation. Interacts with PORCN. Interacts with WLS. Interacts with glypican GCP3. Interacts with PKD1 (via extracellular domain). Interacts with TMEM67. Glycosylation is necessary for secretion but not for activity. Post-translationally, palmitoleoylation is required for efficient binding to frizzled receptors. Depalmitoleoylation leads to Wnt signaling pathway inhibition. In terms of processing, proteolytic processing by TIKI1 and TIKI2 promotes oxidation and formation of large disulfide-bond oligomers, leading to inactivation of WNT5A. In terms of tissue distribution, expressed in a gradient at the caudal end of the embryo during gastrulation and later in the distal-most aspect of several structures that extend from the body such as the limbs and genital tubercle.

It localises to the secreted. The protein localises to the extracellular space. Its subcellular location is the extracellular matrix. Its function is as follows. Ligand for members of the frizzled family of seven transmembrane receptors. Can activate or inhibit canonical Wnt signaling, depending on receptor context. In the presence of FZD4, activates beta-catenin signaling. In the presence of ROR2, inhibits the canonical Wnt pathway by promoting beta-catenin degradation through a GSK3-independent pathway which involves down-regulation of beta-catenin-induced reporter gene expression. Suppression of the canonical pathway allows chondrogenesis to occur and inhibits tumor formation. Stimulates cell migration. Decreases proliferation, migration, invasiveness and clonogenicity of carcinoma cells and may act as a tumor suppressor. Mediates motility of melanoma cells. Required during embryogenesis for extension of the primary anterior-posterior axis and for outgrowth of limbs and the genital tubercle. Inhibits type II collagen expression in chondrocytes. In Mus musculus (Mouse), this protein is Protein Wnt-5a (Wnt5a).